An 887-amino-acid polypeptide reads, in one-letter code: Pyruvate dehydrogenase E1 component (887 aa).

In terms of assembly, homodimer. Part of the PDH complex, consisting of multiple copies of pyruvate dehydrogenase (E1), dihydrolipoamide acetyltransferase (E2) and lipoamide dehydrogenase (E3). Thiamine diphosphate serves as cofactor.

The enzyme catalyses N(6)-[(R)-lipoyl]-L-lysyl-[protein] + pyruvate + H(+) = N(6)-[(R)-S(8)-acetyldihydrolipoyl]-L-lysyl-[protein] + CO2. In terms of biological role, component of the pyruvate dehydrogenase (PDH) complex, that catalyzes the overall conversion of pyruvate to acetyl-CoA and CO(2). In Buchnera aphidicola subsp. Acyrthosiphon pisum (strain APS) (Acyrthosiphon pisum symbiotic bacterium), this protein is Pyruvate dehydrogenase E1 component (aceE).